Consider the following 299-residue polypeptide: Formamidopyrimidine-DNA glycosylase (299 aa).

Residue P2 is the Schiff-base intermediate with DNA of the active site. E3 serves as the catalytic Proton donor. K58 serves as the catalytic Proton donor; for beta-elimination activity. DNA is bound by residues H106, R125, and K168. The FPG-type zinc-finger motif lies at 259–295 (RVYDRVGHACPTKGCTGRVGRIVQGGRSTFFCETCQV). R285 functions as the Proton donor; for delta-elimination activity in the catalytic mechanism.

This sequence belongs to the FPG family. Monomer. Zn(2+) is required as a cofactor.

It catalyses the reaction Hydrolysis of DNA containing ring-opened 7-methylguanine residues, releasing 2,6-diamino-4-hydroxy-5-(N-methyl)formamidopyrimidine.. The enzyme catalyses 2'-deoxyribonucleotide-(2'-deoxyribose 5'-phosphate)-2'-deoxyribonucleotide-DNA = a 3'-end 2'-deoxyribonucleotide-(2,3-dehydro-2,3-deoxyribose 5'-phosphate)-DNA + a 5'-end 5'-phospho-2'-deoxyribonucleoside-DNA + H(+). In terms of biological role, involved in base excision repair of DNA damaged by oxidation or by mutagenic agents. Acts as a DNA glycosylase that recognizes and removes damaged bases. Has a preference for oxidized purines, such as 7,8-dihydro-8-oxoguanine (8-oxoG). Has AP (apurinic/apyrimidinic) lyase activity and introduces nicks in the DNA strand. Cleaves the DNA backbone by beta-delta elimination to generate a single-strand break at the site of the removed base with both 3'- and 5'-phosphates. This is Formamidopyrimidine-DNA glycosylase from Methylorubrum extorquens (strain CM4 / NCIMB 13688) (Methylobacterium extorquens).